The sequence spans 151 residues: MKIVIQRVKSASVSIDGKIKEKINQGFLLLVGVEDADSNFDLDYAVRKIAQMRIFSDEADKMNLSVQDIQGEILSISQFTLYAETKKGNRPSFSAAGKPDFAKAMYEKFNDSLAQIVPVKAGVFGADMQVELINDGPVTIILDTKEARKNA.

The Gly-cisPro motif, important for rejection of L-amino acids motif lies at 136–137 (GP).

The protein belongs to the DTD family. Homodimer.

It is found in the cytoplasm. The enzyme catalyses glycyl-tRNA(Ala) + H2O = tRNA(Ala) + glycine + H(+). It catalyses the reaction a D-aminoacyl-tRNA + H2O = a tRNA + a D-alpha-amino acid + H(+). In terms of biological role, an aminoacyl-tRNA editing enzyme that deacylates mischarged D-aminoacyl-tRNAs. Also deacylates mischarged glycyl-tRNA(Ala), protecting cells against glycine mischarging by AlaRS. Acts via tRNA-based rather than protein-based catalysis; rejects L-amino acids rather than detecting D-amino acids in the active site. By recycling D-aminoacyl-tRNA to D-amino acids and free tRNA molecules, this enzyme counteracts the toxicity associated with the formation of D-aminoacyl-tRNA entities in vivo and helps enforce protein L-homochirality. This is D-aminoacyl-tRNA deacylase from Lactococcus lactis subsp. cremoris (strain MG1363).